Reading from the N-terminus, the 558-residue chain is Xylulose kinase 2 (558 aa).

Residues aspartate 16, 20–23 (QSMK), serine 111, and aspartate 283 each bind substrate. Residues threonine 305 and 456-460 (GASAN) contribute to the ATP site.

The protein belongs to the FGGY kinase family. Requires a divalent metal cation as cofactor.

The protein localises to the cytoplasm. The catalysed reaction is D-xylulose + ATP = D-xylulose 5-phosphate + ADP + H(+). Its pathway is isoprenoid biosynthesis; carotenoid biosynthesis. With respect to regulation, repressed by oxo-clomazone (keto-clomazone), a bleaching herbicide. In terms of biological role, mediates 1-deoxy-D-xylulose (DX) phosphorylation in the cytoplasm prior to the translocation of 1-deoxy-D-xylulose 5-phosphate into plastids. Can also phosphorylate D-xylulose (Xyl). Uses preferentially ATP as cosubstrate. The protein is Xylulose kinase 2 of Arabidopsis thaliana (Mouse-ear cress).